The chain runs to 91 residues: UPF0223 protein SAB0963 (91 aa).

Belongs to the UPF0223 family.

This chain is UPF0223 protein SAB0963, found in Staphylococcus aureus (strain bovine RF122 / ET3-1).